A 393-amino-acid polypeptide reads, in one-letter code: Nuclear speckle splicing regulatory protein 1 homolog (393 aa).

The interval 1-49 (MSAPPKRFGLIVKQKEEPKRAPVRVSSVFGDDDDDEAPATATNTSSASV) is disordered. Low complexity predominate over residues 39–48 (ATATNTSSAS). The stretch at 76 to 166 (NYDEIQAIKN…YREQEAEEAA (91 aa)) forms a coiled coil. Residues 187–350 (LLNDLARDPT…SLKDKLKPKR (164 aa)) are disordered. Over residues 199-209 (KQRKMEKKNVR) the composition is skewed to basic residues. Composition is skewed to basic and acidic residues over residues 222 to 236 (EDVK…KSIY), 243 to 261 (DEKK…EGEL), 317 to 333 (DHAQ…KSPE), and 341 to 350 (SLKDKLKPKR).

It belongs to the NSRP1 family.

The polypeptide is Nuclear speckle splicing regulatory protein 1 homolog (Caenorhabditis briggsae).